The sequence spans 132 residues: Small ribosomal subunit protein uS8 (132 aa).

It belongs to the universal ribosomal protein uS8 family. In terms of assembly, part of the 30S ribosomal subunit. Contacts proteins S5 and S12.

Functionally, one of the primary rRNA binding proteins, it binds directly to 16S rRNA central domain where it helps coordinate assembly of the platform of the 30S subunit. The chain is Small ribosomal subunit protein uS8 from Clostridium botulinum (strain 657 / Type Ba4).